We begin with the raw amino-acid sequence, 439 residues long: Methionine aminopeptidase 2-1 (439 aa).

The segment at 1 to 87 (MSGGESRSPD…DKLFPSGNFP (87 aa)) is disordered. Positions 22–32 (GGDDEESDGDG) are enriched in acidic residues. The segment covering 47–61 (KKRKKRNKKKSKKKS) has biased composition (basic residues). Position 190 (His-190) interacts with substrate. A divalent metal cation contacts are provided by Asp-211, Asp-222, and His-291. His-299 is a substrate binding site. A divalent metal cation-binding residues include Glu-324 and Glu-420.

It belongs to the peptidase M24A family. Methionine aminopeptidase eukaryotic type 2 subfamily. The cofactor is Co(2+). Requires Zn(2+) as cofactor. It depends on Mn(2+) as a cofactor. Fe(2+) serves as cofactor.

The protein localises to the cytoplasm. The catalysed reaction is Release of N-terminal amino acids, preferentially methionine, from peptides and arylamides.. Its function is as follows. Cotranslationally removes the N-terminal methionine from nascent proteins. The N-terminal methionine is often cleaved when the second residue in the primary sequence is small and uncharged (Met-Ala-, Cys, Gly, Pro, Ser, Thr, or Val). This chain is Methionine aminopeptidase 2-1, found in Chaetomium globosum (strain ATCC 6205 / CBS 148.51 / DSM 1962 / NBRC 6347 / NRRL 1970) (Soil fungus).